The chain runs to 142 residues: Nucleoside diphosphate kinase (142 aa).

Lys11, Phe59, Arg87, Thr93, Arg104, and Asn114 together coordinate ATP. His117 functions as the Pros-phosphohistidine intermediate in the catalytic mechanism.

It belongs to the NDK family. As to quaternary structure, homotetramer. The cofactor is Mg(2+).

The protein resides in the cytoplasm. The catalysed reaction is a 2'-deoxyribonucleoside 5'-diphosphate + ATP = a 2'-deoxyribonucleoside 5'-triphosphate + ADP. It catalyses the reaction a ribonucleoside 5'-diphosphate + ATP = a ribonucleoside 5'-triphosphate + ADP. Functionally, major role in the synthesis of nucleoside triphosphates other than ATP. The ATP gamma phosphate is transferred to the NDP beta phosphate via a ping-pong mechanism, using a phosphorylated active-site intermediate. The chain is Nucleoside diphosphate kinase from Aeromonas hydrophila subsp. hydrophila (strain ATCC 7966 / DSM 30187 / BCRC 13018 / CCUG 14551 / JCM 1027 / KCTC 2358 / NCIMB 9240 / NCTC 8049).